Reading from the N-terminus, the 41-residue chain is uncharacterized protein (41 aa).

A helical membrane pass occupies residues 10 to 32 (LIILAVPFMIKTSLKTNLIFFFL).

Its subcellular location is the cell inner membrane. This is an uncharacterized protein from Escherichia coli (strain K12).